A 76-amino-acid polypeptide reads, in one-letter code: MAKIIRIKGEILGKDEPMVFTKEYNVVKEDDALETMYSEMGSKHSVKRAYINVLEVSEISEEDVQSPILKKTLEMY.

The protein belongs to the eukaryotic ribosomal protein eL20 family. In terms of assembly, part of the 50S ribosomal subunit. Binds 23S rRNA.

This Methanococcus maripaludis (strain C6 / ATCC BAA-1332) protein is Large ribosomal subunit protein eL20.